The primary structure comprises 515 residues: NAD(P)H-quinone oxidoreductase subunit 2 (515 aa).

14 helical membrane-spanning segments follow: residues 14 to 34 (TILP…ADLI), 42 to 62 (WTPY…IPLW), 79 to 99 (LSLF…LMSI), 109 to 128 (LGEF…FIAG), 132 to 151 (LVFI…LLTG), 167 to 187 (LLIG…LYGL), 206 to 226 (LGLV…ISAV), 240 to 260 (PTPV…ALAI), 274 to 294 (WQLI…VVAL), 302 to 322 (MLAY…VVGT), 330 to 350 (LFYL…VILF), 374 to 394 (LGLS…GFFG), 396 to 416 (IYLF…LGLL), and 462 to 482 (VGLV…NPLF).

This sequence belongs to the complex I subunit 2 family. As to quaternary structure, NDH-1 can be composed of about 15 different subunits; different subcomplexes with different compositions have been identified which probably have different functions.

Its subcellular location is the cellular thylakoid membrane. The enzyme catalyses a plastoquinone + NADH + (n+1) H(+)(in) = a plastoquinol + NAD(+) + n H(+)(out). It catalyses the reaction a plastoquinone + NADPH + (n+1) H(+)(in) = a plastoquinol + NADP(+) + n H(+)(out). In terms of biological role, NDH-1 shuttles electrons from an unknown electron donor, via FMN and iron-sulfur (Fe-S) centers, to quinones in the respiratory and/or the photosynthetic chain. The immediate electron acceptor for the enzyme in this species is believed to be plastoquinone. Couples the redox reaction to proton translocation, and thus conserves the redox energy in a proton gradient. Cyanobacterial NDH-1 also plays a role in inorganic carbon-concentration. In Thermosynechococcus vestitus (strain NIES-2133 / IAM M-273 / BP-1), this protein is NAD(P)H-quinone oxidoreductase subunit 2.